Consider the following 417-residue polypeptide: NADH-quinone oxidoreductase subunit D 2 (417 aa).

The protein belongs to the complex I 49 kDa subunit family. In terms of assembly, NDH-1 is composed of 14 different subunits. Subunits NuoB, C, D, E, F, and G constitute the peripheral sector of the complex.

Its subcellular location is the cell membrane. The catalysed reaction is a quinone + NADH + 5 H(+)(in) = a quinol + NAD(+) + 4 H(+)(out). In terms of biological role, NDH-1 shuttles electrons from NADH, via FMN and iron-sulfur (Fe-S) centers, to quinones in the respiratory chain. The immediate electron acceptor for the enzyme in this species is believed to be ubiquinone. Couples the redox reaction to proton translocation (for every two electrons transferred, four hydrogen ions are translocated across the cytoplasmic membrane), and thus conserves the redox energy in a proton gradient. In Roseiflexus sp. (strain RS-1), this protein is NADH-quinone oxidoreductase subunit D 2.